A 157-amino-acid polypeptide reads, in one-letter code: MAKHSDPNSKLIAENRRARFDYFIEEEIEAGIMLLGSEVKSLRQGGSNIGESYASVEEGELWLINGYIAPYLQAKTWGHEERRKRKLLVSRRELARLWTATAREGMTIVPIRMYFNDRGIVKLKIGIAKGKKLSDKRETSAKRDWSREKQRLLKQNS.

Basic and acidic residues predominate over residues Lys136–Arg151. The tract at residues Lys136 to Ser157 is disordered.

It belongs to the SmpB family.

It localises to the cytoplasm. Its function is as follows. Required for rescue of stalled ribosomes mediated by trans-translation. Binds to transfer-messenger RNA (tmRNA), required for stable association of tmRNA with ribosomes. tmRNA and SmpB together mimic tRNA shape, replacing the anticodon stem-loop with SmpB. tmRNA is encoded by the ssrA gene; the 2 termini fold to resemble tRNA(Ala) and it encodes a 'tag peptide', a short internal open reading frame. During trans-translation Ala-aminoacylated tmRNA acts like a tRNA, entering the A-site of stalled ribosomes, displacing the stalled mRNA. The ribosome then switches to translate the ORF on the tmRNA; the nascent peptide is terminated with the 'tag peptide' encoded by the tmRNA and targeted for degradation. The ribosome is freed to recommence translation, which seems to be the essential function of trans-translation. The polypeptide is SsrA-binding protein (Cereibacter sphaeroides (strain ATCC 17029 / ATH 2.4.9) (Rhodobacter sphaeroides)).